We begin with the raw amino-acid sequence, 172 residues long: Adenine phosphoribosyltransferase (172 aa).

The protein belongs to the purine/pyrimidine phosphoribosyltransferase family. As to quaternary structure, homodimer.

Its subcellular location is the cytoplasm. The catalysed reaction is AMP + diphosphate = 5-phospho-alpha-D-ribose 1-diphosphate + adenine. The protein operates within purine metabolism; AMP biosynthesis via salvage pathway; AMP from adenine: step 1/1. In terms of biological role, catalyzes a salvage reaction resulting in the formation of AMP, that is energically less costly than de novo synthesis. This is Adenine phosphoribosyltransferase from Prochlorococcus marinus (strain MIT 9211).